The following is a 146-amino-acid chain: CysO-cysteine peptidase (146 aa).

Positions 11 to 134 (LVIRADLVNA…LRSYRIVDGA (124 aa)) constitute an MPN domain. The Zn(2+) site is built by histidine 88, histidine 90, and aspartate 101. The JAMM motif motif lies at 88-101 (HSHTATEAYPSRTD).

Belongs to the peptidase M67A family. Zn(2+) serves as cofactor.

The enzyme catalyses [CysO sulfur-carrier protein]-Gly-NH-CH2-C(O)-S-L-Cys + H2O = [CysO sulfur-carrier protein]-C-terminal Gly-Gly + L-cysteine + H(+). It participates in amino-acid biosynthesis; L-cysteine biosynthesis. Functionally, protease that hydrolyzes the covalent CysO-cysteine adduct synthesized by CysM to release L-cysteine and regenerate CysO. This is CysO-cysteine peptidase (mec) from Mycobacterium bovis (strain ATCC BAA-935 / AF2122/97).